We begin with the raw amino-acid sequence, 520 residues long: uncharacterized protein (520 aa).

9 helical membrane passes run 38 to 58, 84 to 104, 105 to 125, 138 to 158, 167 to 187, 220 to 240, 271 to 291, 318 to 338, and 355 to 375; these read VVLI…IPGG, IAIY…GIFN, IGIS…ILKV, IITV…VATL, VVSA…LVET, FGWL…AVVL, FLSF…VYTA, IAIG…SVLI, and ASLV…MVYF.

It localises to the cell membrane. This is an uncharacterized protein from Mycoplasma genitalium (strain ATCC 33530 / DSM 19775 / NCTC 10195 / G37) (Mycoplasmoides genitalium).